We begin with the raw amino-acid sequence, 1914 residues long: Fatty acid synthase beta subunit stcK (1914 aa).

The tract at residues 17–395 (LYACFGGQGP…LEGTGMNVVN (379 aa)) is acetyltransferase (AT) domain. An enoyl reductase (ER) domain region spans residues 446-692 (TRLLGTPHVM…LIVEAPGVKD (247 aa)). Positions 1009–1509 (GECAWGYAAL…RANDRLRMEI (501 aa)) are dehydratase (DH) domain. One can recognise a MaoC-like domain in the interval 1398 to 1532 (FLNRHGAPRV…VRVLKESTGE (135 aa)). Residues 1548–1900 (YVFTGQGTQE…IRLVQGVTQS (353 aa)) form a malonyl/palmitoyl transferase (MT/PT) domain region.

The protein belongs to the fungal fatty acid synthetase subunit beta family. In terms of assembly, [Alpha(6)beta(6)] hexamers of two multifunctional subunits (alpha and beta).

The catalysed reaction is acetyl-CoA + n malonyl-CoA + 2n NADPH + 4n H(+) = a long-chain-acyl-CoA + n CoA + n CO2 + 2n NADP(+).. It catalyses the reaction holo-[ACP] + acetyl-CoA = acetyl-[ACP] + CoA. It carries out the reaction holo-[ACP] + malonyl-CoA = malonyl-[ACP] + CoA. The enzyme catalyses a (3R)-hydroxyacyl-[ACP] = a (2E)-enoyl-[ACP] + H2O. The catalysed reaction is a 2,3-saturated acyl-[ACP] + NAD(+) = a (2E)-enoyl-[ACP] + NADH + H(+). It catalyses the reaction (9Z)-octadecenoyl-[ACP] + H2O = (9Z)-octadecenoate + holo-[ACP] + H(+). It functions in the pathway mycotoxin biosynthesis; sterigmatocystin biosynthesis. Its function is as follows. Fatty acid synthase beta subunit; part of the gene cluster that mediates the biosynthesis of sterigmatocystin (ST), a polyketide-derived furanocoumarin which is part of the most toxic and carcinogenic compounds among the known mycotoxins. The first step in the biosynthesis of sterigmatocystin is the production of hexanoate by the fatty acid synthase (FAS) units stcJ and stcK. The polyketide backbone is assembled by the non-reducing polyketide synthase stcA by condensation of the starter hexanoyl-CoA and 7 malonyl-CoA extender units followed by cyclization and release of norsolorinic acid. Norsolorinic acid is the first stable intermediate in the biosynthesis of sterigmatocystin and is converted into averantin (AVN) by the ketoreductase stcE which reduces the hexanoate ketone to an alcohol. Averantin is then oxidized into 5'-hydroxyaverantin (HAVN) by the cytochrome P450 monooxygenase stcF. 5'-hydroxyaverantin is further converted to 5'-oxyaverantin (OAVN) by the 5'-hydroxyaverantin dehydrogenase stcG. The next step is the conversion of OAVN into averufin (AVF) which is catalyzed by a yet to be identified enzyme. The cytochrome P450 monooxygenase stcB and the flavin-binding monooxygenase stcW are both required for the conversion of averufin to 1-hydroxyversicolorone. The esterase stcI probably catalyzes the formation of versiconal hemiacetal acetate from 1-hydroxyversicolorone. The oxydoreductase stcN then probably catalyzes the biosynthetic step from versiconal to versicolorin B (VERB). The next step is performed by the versicolorin B desaturase stcL to produce versicolorin A (VERA). The ketoreductase stcU and the cytochrome P450 monooxygenase stcS are involved in the conversion of versicolorin A to demethylsterigmatocystin. The Baeyer-Villiger oxidas stcQ and the reductase stcR might be involved in the biosynthetic step from versicolorin A to demethylsterigmatocystin. The final step in the biosynthesis of sterigmatocystin is the methylation of demethylsterigmatocystin catalyzed by the methyltransferase stcP. The protein is Fatty acid synthase beta subunit stcK of Emericella nidulans (strain FGSC A4 / ATCC 38163 / CBS 112.46 / NRRL 194 / M139) (Aspergillus nidulans).